A 41-amino-acid chain; its full sequence is Histone H3.2 (41 aa).

Positions 1–41 are disordered; that stretch reads MARAKQTARKSTGAEAPRKQLASKAARKSAPATGGIKKPHR.

This sequence belongs to the histone H3 family. As to quaternary structure, the nucleosome is a histone octamer containing two molecules each of H2A, H2B, H3 and H4 assembled in one H3-H4 heterotetramer and two H2A-H2B heterodimers. The octamer wraps approximately 147 bp of DNA.

The protein resides in the nucleus. It localises to the chromosome. Its function is as follows. Core component of nucleosome. Nucleosomes wrap and compact DNA into chromatin, limiting DNA accessibility to the cellular machineries which require DNA as a template. Histones thereby play a central role in transcription regulation, DNA repair, DNA replication and chromosomal stability. DNA accessibility is regulated via a complex set of post-translational modifications of histones, also called histone code, and nucleosome remodeling. This is Histone H3.2 from Tetrahymena borealis.